A 123-amino-acid polypeptide reads, in one-letter code: Cytochrome b-c1 complex subunit 7 (123 aa).

The protein belongs to the UQCRB/QCR7 family. Component of the ubiquinol-cytochrome c oxidoreductase (cytochrome b-c1 complex, complex III, CIII), a multisubunit enzyme composed of 3 respiratory subunits cytochrome b, cytochrome c1 and Rieske protein, 2 core protein subunits, and additional low-molecular weight protein subunits. The complex exists as an obligatory dimer and forms supercomplexes (SCs) in the inner mitochondrial membrane with cytochrome c oxidase (complex IV, CIV). Post-translationally, the N-terminus is blocked.

The protein resides in the mitochondrion inner membrane. Its function is as follows. Component of the ubiquinol-cytochrome c oxidoreductase, a multisubunit transmembrane complex that is part of the mitochondrial electron transport chain which drives oxidative phosphorylation. The respiratory chain contains 3 multisubunit complexes succinate dehydrogenase (complex II, CII), ubiquinol-cytochrome c oxidoreductase (cytochrome b-c1 complex, complex III, CIII) and cytochrome c oxidase (complex IV, CIV), that cooperate to transfer electrons derived from NADH and succinate to molecular oxygen, creating an electrochemical gradient over the inner membrane that drives transmembrane transport and the ATP synthase. The cytochrome b-c1 complex catalyzes electron transfer from ubiquinol to cytochrome c, linking this redox reaction to translocation of protons across the mitochondrial inner membrane, with protons being carried across the membrane as hydrogens on the quinol. In the process called Q cycle, 2 protons are consumed from the matrix, 4 protons are released into the intermembrane space and 2 electrons are passed to cytochrome c. This Solanum tuberosum (Potato) protein is Cytochrome b-c1 complex subunit 7.